A 474-amino-acid chain; its full sequence is Glutamine synthetase (474 aa).

The GS beta-grasp domain maps to 15–99 (EDVQFIDVRF…MTFFIHDPIT (85 aa)). The GS catalytic domain occupies 107 to 474 (PRNIAKKAET…PYEFTLYYDI (368 aa)). Residues Glu132 and Glu134 each contribute to the Mg(2+) site. Glu210 provides a ligand contact to ATP. The Mg(2+) site is built by Glu215 and Glu223. L-glutamate is bound by residues 267–268 (NG) and Gly268. His272 lines the Mg(2+) pocket. ATP-binding positions include 274-276 (HSS) and Ser276. The L-glutamate site is built by Arg325, Glu331, and Arg343. Arg343, Arg348, and Lys357 together coordinate ATP. Glu362 contacts Mg(2+). Arg364 serves as a coordination point for L-glutamate. The residue at position 402 (Tyr402) is an O-AMP-tyrosine.

The protein belongs to the glutamine synthetase family. As to quaternary structure, oligomer of 12 subunits arranged in the form of two hexagons. Requires Mg(2+) as cofactor.

It localises to the cytoplasm. The enzyme catalyses L-glutamate + NH4(+) + ATP = L-glutamine + ADP + phosphate + H(+). The activity of this enzyme could be controlled by adenylation under conditions of abundant glutamine. Functionally, catalyzes the ATP-dependent biosynthesis of glutamine from glutamate and ammonia. The sequence is that of Glutamine synthetase from Frankia alni.